Here is a 272-residue protein sequence, read N- to C-terminus: MSRMRLIVAGAGGRMGRALVRAIADSDGAELAGALEAPGSELIGKDSGLLAGLPANNIKLSADLWAMSAEADGILDFTVPAATIANVAIAAERGIVHVVGTTGLSASDDAVIKSVTKRAIVVQSGNMSLGVNLLSALVKQVAKSLDANFDIEILEMHHKHKVDAPSGTALMLGRAAAEGRGITLDGHSARGRDGITGARRSGDIGFASLRGGTAAGDHSVIFAGPSERLVLSHQAEDRMIFAHGALKAALWAHGKPPGYYTMDDVLGLKDLF.

NAD(+) contacts are provided by residues 10–15 (GAGGRM), E36, 100–102 (GTT), and 124–127 (SGNM). H157 functions as the Proton donor/acceptor in the catalytic mechanism. H158 contacts (S)-2,3,4,5-tetrahydrodipicolinate. The active-site Proton donor is K161. 167–168 (GT) is a binding site for (S)-2,3,4,5-tetrahydrodipicolinate.

It belongs to the DapB family.

Its subcellular location is the cytoplasm. The enzyme catalyses (S)-2,3,4,5-tetrahydrodipicolinate + NAD(+) + H2O = (2S,4S)-4-hydroxy-2,3,4,5-tetrahydrodipicolinate + NADH + H(+). It carries out the reaction (S)-2,3,4,5-tetrahydrodipicolinate + NADP(+) + H2O = (2S,4S)-4-hydroxy-2,3,4,5-tetrahydrodipicolinate + NADPH + H(+). Its pathway is amino-acid biosynthesis; L-lysine biosynthesis via DAP pathway; (S)-tetrahydrodipicolinate from L-aspartate: step 4/4. Its function is as follows. Catalyzes the conversion of 4-hydroxy-tetrahydrodipicolinate (HTPA) to tetrahydrodipicolinate. This is 4-hydroxy-tetrahydrodipicolinate reductase from Bradyrhizobium sp. (strain ORS 278).